We begin with the raw amino-acid sequence, 466 residues long: Ribulose bisphosphate carboxylase large chain (466 aa).

K5 carries the N6,N6,N6-trimethyllysine modification. Substrate is bound by residues N114 and T164. The active-site Proton acceptor is K166. A substrate-binding site is contributed by K168. Mg(2+)-binding residues include K192, D194, and E195. Residue K192 is modified to N6-carboxylysine. Residue H285 is the Proton acceptor of the active site. Substrate-binding residues include R286, H318, and S370.

Belongs to the RuBisCO large chain family. Type I subfamily. Heterohexadecamer of 8 large chains and 8 small chains; disulfide-linked. The disulfide link is formed within the large subunit homodimers. It depends on Mg(2+) as a cofactor. Post-translationally, the disulfide bond which can form in the large chain dimeric partners within the hexadecamer appears to be associated with oxidative stress and protein turnover.

The protein resides in the plastid. The protein localises to the chloroplast. It catalyses the reaction 2 (2R)-3-phosphoglycerate + 2 H(+) = D-ribulose 1,5-bisphosphate + CO2 + H2O. The enzyme catalyses D-ribulose 1,5-bisphosphate + O2 = 2-phosphoglycolate + (2R)-3-phosphoglycerate + 2 H(+). RuBisCO catalyzes two reactions: the carboxylation of D-ribulose 1,5-bisphosphate, the primary event in carbon dioxide fixation, as well as the oxidative fragmentation of the pentose substrate in the photorespiration process. Both reactions occur simultaneously and in competition at the same active site. The polypeptide is Ribulose bisphosphate carboxylase large chain (Drosera binata (Fork-leaved sundew)).